A 38-amino-acid polypeptide reads, in one-letter code: Potassium channel toxin alpha-KTx 3.11 (38 aa).

Intrachain disulfides connect Cys8–Cys28, Cys14–Cys33, and Cys18–Cys35.

This sequence belongs to the short scorpion toxin superfamily. Potassium channel inhibitor family. Alpha-KTx 03 subfamily. In terms of tissue distribution, expressed by the venom gland.

Its subcellular location is the secreted. Blocks the voltage-gated potassium channel Kv1.3/KCNA3 (IC(50)=7.2 nM). Correnti and colleagues have also shown that this toxin inhibits Kv1.1/KCNA1, which is different from Abdel-Mottaleb and colleagues conclusions. This chain is Potassium channel toxin alpha-KTx 3.11, found in Odontobuthus doriae (Yellow Iranian scorpion).